We begin with the raw amino-acid sequence, 292 residues long: Fat storage-inducing transmembrane protein 1 (292 aa).

Residues 1 to 18 (MERGPVVGAGLGAGARIQ) are Lumenal-facing. The chain crosses the membrane as a helical span at residues 19–39 (ALLGCLLKVLLWVASALLYFG). Residues 40–54 (SEQAARLLGSPCLRR) lie on the Cytoplasmic side of the membrane. A helical transmembrane segment spans residues 55–75 (LYHAWLAAVVIFGPLLQFHVN). The Lumenal portion of the chain corresponds to 76 to 94 (PRTIFASHGNFFNIKFVNS). Residues 95 to 115 (AWGWTCTFLGGFVLLVVFLAT) form a helical membrane-spanning segment. Topologically, residues 116 to 141 (RRVAVTARHLSRLVVGAAVWRGAGRA) are cytoplasmic. A helical transmembrane segment spans residues 142–162 (FLLIEDLTGSCFEPLPQGLLL). At 163-187 (HELPDRRSCLAAGHQWRGYTVSSHT) the chain is on the lumenal side. Residue His-186 is part of the active site. A helical membrane pass occupies residues 188–208 (FLLTFCCLLMAEEAAVFAKYL). Topologically, residues 209–220 (AHGLPAGAPLRL) are cytoplasmic. A helical transmembrane segment spans residues 221–241 (VFLLNVLLLGLWNFLLLCTVI). The Lumenal segment spans residues 242 to 249 (YFHQYTHK). The active site involves His-244. Residues 250–270 (VVGAAVGTFAWYLTYGSWYHQ) form a helical membrane-spanning segment. Topologically, residues 271 to 292 (PWSPGSPGHGLFPRPHSSRKHN) are cytoplasmic.

Belongs to the FIT family. FIT1 subfamily. As to expression, primarily expressed in heart and skeletal muscle.

The protein resides in the endoplasmic reticulum membrane. In terms of biological role, plays an important role in the formation of lipid droplets (LDs) which are storage organelles at the center of lipid and energy homeostasis. Directly binds to diacylglycerol (DAGs) and triacylglycerol. This chain is Fat storage-inducing transmembrane protein 1, found in Homo sapiens (Human).